Reading from the N-terminus, the 95-residue chain is Probable FAD-linked sulfhydryl oxidase OPG072 (95 aa).

Residues 1-8 (MNPKHWGR) lie on the Intravirion side of the membrane. In terms of domain architecture, ERV/ALR sulfhydryl oxidase spans 1 to 95 (MNPKHWGRAA…AIDVSKVKPL (95 aa)). Residues 9–25 (AAWTIIFIVLSQAGLDG) form a helical membrane-spanning segment. The Virion surface segment spans residues 26 to 95 (NIEACKRKLY…AIDVSKVKPL (70 aa)). Cysteines 43 and 46 form a disulfide.

Belongs to the orthopoxvirus OPG072 family. In terms of assembly, interacts with OPG128; this interaction involves formation of a transient disulfide-bonded intermediate, allowing disulfide bond transfer. The cofactor is FAD.

It localises to the virion membrane. The protein resides in the host cytoplasm. The catalysed reaction is 2 R'C(R)SH + O2 = R'C(R)S-S(R)CR' + H2O2. FAD-dependent sulfhydryl oxidase that catalyzes disulfide bond formation. The complete pathway for formation of disulfide bonds in intracellular virion membrane proteins sequentially involves thiol-disulfide transfer between OPG072, OPG128 and OPG088. This Variola virus (isolate Human/India/Ind3/1967) (VARV) protein is Probable FAD-linked sulfhydryl oxidase OPG072 (OPG072).